The chain runs to 213 residues: MKWLEERFPGIGHVAKDVADHPVPSHTLNIFFCLGGLTLLCFIVQCLTGIFLAFYYKPTPEAAFTSVQMITNEVRFGSVIRSMHHWSCQLMILLVFLHMLRVYYTGAFKRPRELNWVAGCFLLVLSLALAFTGYLLPYEQLSYWASVIGAETANTLPVVGPTLKIMMQGGIKVTAEMLSRFYVLHVMILPAVAIIFLVAHFIMIRVQGISDPM.

The chain crosses the membrane as a helical span at residues isoleucine 30–isoleucine 50. Cysteine 33 contacts heme c. Histidine 84 and histidine 98 together coordinate heme b. 3 helical membrane-spanning segments follow: residues cysteine 88 to phenylalanine 108, leucine 114 to tyrosine 134, and leucine 184 to isoleucine 204. Residues histidine 185 and histidine 200 each contribute to the heme b site.

Belongs to the cytochrome b family. PetB subfamily. The subunits of the cytochrome bc complex are a Rieske Fe-S protein (PetC), cytochrome b6 (PetB), subunit IV (PetD), and a diheme cytochrome c (PetX). The cofactor is heme b. Requires heme c as cofactor.

The protein resides in the cell membrane. Functionally, component of the cytochrome bc complex which donates electrons to the photosynthetic reaction center. The chain is Cytochrome b6 from Heliomicrobium gestii (Heliobacterium gestii).